The primary structure comprises 154 residues: dCTP deaminase (154 aa).

DCTP contacts are provided by residues 79–84 (RSSLAR), D95, Q124, and Y138.

It belongs to the dCTP deaminase family. In terms of assembly, homotrimer.

The enzyme catalyses dCTP + H2O + H(+) = dUTP + NH4(+). Its pathway is pyrimidine metabolism; dUMP biosynthesis; dUMP from dCTP (dUTP route): step 1/2. Functionally, catalyzes the deamination of dCTP to dUTP. This is dCTP deaminase from Pyrococcus abyssi (strain GE5 / Orsay).